A 147-amino-acid polypeptide reads, in one-letter code: MIYWIFLGLAIIAEIIGTLSMKYASVSGEMTGHIVMYFMITGSYVMLSLAVKKVALGVAYALWEGIGILIITIFSVMWFGETLSPLKIAGLVTLIGGILLVKSGTRKPKQPNRHRGNRPPSVQGLKTQTTGHHKGVAVESGEHHAAA.

A run of 4 helical transmembrane segments spans residues 1-21 (MIYW…TLSM), 31-51 (TGHI…SLAV), 54-74 (VALG…ITIF), and 81-101 (ETLS…ILLV). Over residues 105–117 (TRKPKQPNRHRGN) the composition is skewed to basic residues. The segment at 105–147 (TRKPKQPNRHRGNRPPSVQGLKTQTTGHHKGVAVESGEHHAAA) is disordered.

Belongs to the drug/metabolite transporter (DMT) superfamily. Small multidrug resistance (SMR) (TC 2.A.7.1) family. MdtJ subfamily. In terms of assembly, forms a complex with MdtI.

It is found in the cell inner membrane. Catalyzes the excretion of spermidine. This is Spermidine export protein MdtJ from Yersinia pseudotuberculosis serotype O:3 (strain YPIII).